A 259-amino-acid chain; its full sequence is Ferritin-3, chloroplastic (259 aa).

A chloroplast-targeting transit peptide spans 1 to 49; it reads MLLKAASTFSLLNIHGEKKDISPLFSSSSSISSPVSSGKSGNLSFPLRA. The segment at 50 to 88 is extension peptide (EP); it reads SKSSTTTTSTLSGVVFEPFEEVKKEMDLVPSGQQLSLAR. Positions 89-242 constitute a Ferritin-like diiron domain; sequence HLYSPECEAA…EYVSQLRRLG (154 aa). Residues Glu-106, Glu-141, His-144, Glu-190, and Gln-224 each contribute to the Fe cation site.

This sequence belongs to the ferritin family. In terms of assembly, oligomer of 24 subunits. There are two types of subunits: L (light) chain and H (heavy) chain. The major chain can be light or heavy, depending on the species and tissue type. The functional molecule forms a roughly spherical shell with a diameter of 12 nm and contains a central cavity into which the insoluble mineral iron core is deposited.

It localises to the plastid. Its subcellular location is the chloroplast. It catalyses the reaction 4 Fe(2+) + O2 + 4 H(+) = 4 Fe(3+) + 2 H2O. Its function is as follows. Stores iron in a soluble, non-toxic, readily available form. Important for iron homeostasis. Has ferroxidase activity. Iron is taken up in the ferrous form and deposited as ferric hydroxides after oxidation. The sequence is that of Ferritin-3, chloroplastic (FER3) from Arabidopsis thaliana (Mouse-ear cress).